A 364-amino-acid chain; its full sequence is tRNA 2-selenouridine synthase (364 aa).

The 124-residue stretch at 14 to 137 folds into the Rhodanese domain; the sequence is LIADTPIIDV…LRQTAIQATI (124 aa). The active-site S-selanylcysteine intermediate is the Cys-97.

Belongs to the SelU family. Monomer.

The catalysed reaction is 5-methylaminomethyl-2-thiouridine(34) in tRNA + selenophosphate + (2E)-geranyl diphosphate + H2O + H(+) = 5-methylaminomethyl-2-selenouridine(34) in tRNA + (2E)-thiogeraniol + phosphate + diphosphate. The enzyme catalyses 5-methylaminomethyl-2-thiouridine(34) in tRNA + (2E)-geranyl diphosphate = 5-methylaminomethyl-S-(2E)-geranyl-thiouridine(34) in tRNA + diphosphate. It catalyses the reaction 5-methylaminomethyl-S-(2E)-geranyl-thiouridine(34) in tRNA + selenophosphate + H(+) = 5-methylaminomethyl-2-(Se-phospho)selenouridine(34) in tRNA + (2E)-thiogeraniol. It carries out the reaction 5-methylaminomethyl-2-(Se-phospho)selenouridine(34) in tRNA + H2O = 5-methylaminomethyl-2-selenouridine(34) in tRNA + phosphate. Functionally, involved in the post-transcriptional modification of the uridine at the wobble position (U34) of tRNA(Lys), tRNA(Glu) and tRNA(Gln). Catalyzes the conversion of 2-thiouridine (S2U-RNA) to 2-selenouridine (Se2U-RNA). Acts in a two-step process involving geranylation of 2-thiouridine (S2U) to S-geranyl-2-thiouridine (geS2U) and subsequent selenation of the latter derivative to 2-selenouridine (Se2U) in the tRNA chain. The protein is tRNA 2-selenouridine synthase of Shigella boydii serotype 18 (strain CDC 3083-94 / BS512).